The primary structure comprises 339 residues: Methionyl-tRNA formyltransferase (339 aa).

110–113 (SLLP) contributes to the (6S)-5,6,7,8-tetrahydrofolate binding site.

This sequence belongs to the Fmt family.

It catalyses the reaction L-methionyl-tRNA(fMet) + (6R)-10-formyltetrahydrofolate = N-formyl-L-methionyl-tRNA(fMet) + (6S)-5,6,7,8-tetrahydrofolate + H(+). In terms of biological role, attaches a formyl group to the free amino group of methionyl-tRNA(fMet). The formyl group appears to play a dual role in the initiator identity of N-formylmethionyl-tRNA by promoting its recognition by IF2 and preventing the misappropriation of this tRNA by the elongation apparatus. The polypeptide is Methionyl-tRNA formyltransferase (Prochlorococcus marinus (strain MIT 9211)).